A 185-amino-acid polypeptide reads, in one-letter code: Ribosome-recycling factor (185 aa).

It belongs to the RRF family.

The protein localises to the cytoplasm. Its function is as follows. Responsible for the release of ribosomes from messenger RNA at the termination of protein biosynthesis. May increase the efficiency of translation by recycling ribosomes from one round of translation to another. This chain is Ribosome-recycling factor, found in Shewanella denitrificans (strain OS217 / ATCC BAA-1090 / DSM 15013).